Here is a 520-residue protein sequence, read N- to C-terminus: RNA polymerase sigma factor sigA (520 aa).

Residues 1–66 constitute a chloroplast transit peptide; sequence MTATPAVIGL…APATPKLTAV (66 aa). A compositionally biased stretch (gly residues) spans 37-49; sequence GGGGGGGGGGGGD. Disordered stretches follow at residues 37 to 57, 87 to 117, and 171 to 190; these read GGGG…APPA, HHSS…AHAH, and SVSA…TKNG. The segment covering 96-108 has biased composition (pro residues); sequence APPPPPPPPPTPS. Residues 175–187 are compositionally biased toward basic residues; sequence RQRRMSGRRRGRT. The Polymerase core binding motif lies at 305-318; it reads DLIQGGLIGLLRGI. Residues 479–498 constitute a DNA-binding region (H-T-H motif); that stretch reads WEDISRQFGLSRERVRQVGL.

Belongs to the sigma-70 factor family. As to expression, expressed in shoots. Expressed in the tips of fully elongated leaves. Expressed in leaf blades.

It is found in the plastid. The protein resides in the chloroplast. In terms of biological role, sigma factors are initiation factors that promote the attachment of plastid-encoded RNA polymerase (PEP) to specific initiation sites and are then released. Controls the transcription of the psaA and psaB genes in chloroplast, and thus maintains the abundance of the core protein complex PsaA-PsaB of photosystem I (PSI) in the thylakoid membrane. Maintains PSI activity, sufficient rate of electron transfer from PSII to PSI, and photochemical efficiency. This is RNA polymerase sigma factor sigA from Oryza sativa subsp. japonica (Rice).